A 243-amino-acid polypeptide reads, in one-letter code: ATP synthase subunit a, chloroplastic (243 aa).

5 consecutive transmembrane segments (helical) span residues 32–52, 96–116, 129–149, 195–215, and 216–236; these read GQVL…SFVG, TVFL…WALI, DINT…YAGI, LVVG…IMLL, and GCFT…AYIG.

This sequence belongs to the ATPase A chain family. As to quaternary structure, F-type ATPases have 2 components, CF(1) - the catalytic core - and CF(0) - the membrane proton channel. CF(1) has five subunits: alpha(3), beta(3), gamma(1), delta(1), epsilon(1). CF(0) has four main subunits: a, b, b' and c.

The protein resides in the plastid. It localises to the chloroplast thylakoid membrane. Key component of the proton channel; it plays a direct role in the translocation of protons across the membrane. The sequence is that of ATP synthase subunit a, chloroplastic from Tetradesmus obliquus (Green alga).